The following is a 268-amino-acid chain: 3-deoxy-manno-octulosonate cytidylyltransferase (268 aa).

This sequence belongs to the KdsB family.

It localises to the cytoplasm. It catalyses the reaction 3-deoxy-alpha-D-manno-oct-2-ulosonate + CTP = CMP-3-deoxy-beta-D-manno-octulosonate + diphosphate. It functions in the pathway nucleotide-sugar biosynthesis; CMP-3-deoxy-D-manno-octulosonate biosynthesis; CMP-3-deoxy-D-manno-octulosonate from 3-deoxy-D-manno-octulosonate and CTP: step 1/1. It participates in bacterial outer membrane biogenesis; lipopolysaccharide biosynthesis. Activates KDO (a required 8-carbon sugar) for incorporation into bacterial lipopolysaccharide in Gram-negative bacteria. The polypeptide is 3-deoxy-manno-octulosonate cytidylyltransferase (Ralstonia pickettii (strain 12J)).